Here is a 146-residue protein sequence, read N- to C-terminus: MRLLQLLFRASPATLLLVLCLQLGANKAQDNTRKIIIKDFDIPKSVRPNEEVTATLAVQTELKECMVVKTYLISSVPLEGGFNYKYTACLCNENPKTFYWDFYTNRTVRIAAVVDVIRELGICPDDAAVIPIKNNRFYTIETLEVE.

The signal sequence occupies residues 1 to 28 (MRLLQLLFRASPATLLLVLCLQLGANKA). Glutamine 29 carries the pyrrolidone carboxylic acid modification. 2 cysteine pairs are disulfide-bonded: cysteine 65–cysteine 91 and cysteine 89–cysteine 123. A glycan (N-linked (GlcNAc...) asparagine) is linked at asparagine 105.

The protein belongs to the PIP family. As to quaternary structure, monomer. Interacts with AZGP1.

The protein localises to the secreted. The sequence is that of Prolactin-inducible protein homolog (PIP) from Symphalangus syndactylus (Siamang).